The chain runs to 111 residues: Large ribosomal subunit protein uL22 (111 aa).

The protein belongs to the universal ribosomal protein uL22 family. Part of the 50S ribosomal subunit.

Functionally, this protein binds specifically to 23S rRNA; its binding is stimulated by other ribosomal proteins, e.g. L4, L17, and L20. It is important during the early stages of 50S assembly. It makes multiple contacts with different domains of the 23S rRNA in the assembled 50S subunit and ribosome. The globular domain of the protein is located near the polypeptide exit tunnel on the outside of the subunit, while an extended beta-hairpin is found that lines the wall of the exit tunnel in the center of the 70S ribosome. In Chlamydia muridarum (strain MoPn / Nigg), this protein is Large ribosomal subunit protein uL22.